A 65-amino-acid chain; its full sequence is Hirudin-3B (65 aa).

The segment at V1–Y3 is interaction with thrombin active site. Intrachain disulfides connect C6/C14, C16/C28, and C22/C39. Residues V40–Q65 are disordered. T45 is a glycosylation site (O-linked (GalNAc...) threonine). The interval D55–Q65 is interaction with fibrinogen-binding exosite of thrombin. The span at D55–Q65 shows a compositional bias: acidic residues. A Sulfotyrosine modification is found at Y63.

Belongs to the protease inhibitor I14 (hirudin) family.

The protein localises to the secreted. In terms of biological role, hirudin is a potent thrombin-specific protease inhibitor. It forms a stable non-covalent complex with alpha-thrombin, thereby abolishing its ability to cleave fibrinogen. This chain is Hirudin-3B, found in Hirudo medicinalis (Medicinal leech).